The sequence spans 716 residues: Polycystin-2 (716 aa).

2 stretches are compositionally biased toward basic and acidic residues: residues 1–10 and 30–41; these read MNYGAADERW and MVSEEYEHDKKK. Residues 1–44 are disordered; it reads MNYGAADERWANPPQPVAAAEHGPSFDHSMVSEEYEHDKKKNPA. Residues 1–72 lie on the Cytoplasmic side of the membrane; sequence MNYGAADERW…SDGKIKLTAR (72 aa). A helical transmembrane segment spans residues 73–93; that stretch reads SFMEVGGYAVFLIVLVYVAFA. Over 94–324 the chain is Extracellular; it reads QNSIQSYYYS…YQTSGGTRMM (231 aa). 2 N-linked (GlcNAc...) asparagine glycosylation sites follow: Asn150 and Asn177. Cysteines 180 and 193 form a disulfide. A helical transmembrane segment spans residues 325 to 345; it reads IFEGIFCGFILYFIFEELFAI. Topologically, residues 346–355 are cytoplasmic; that stretch reads GRHRLHYLTQ. Residues 356-376 traverse the membrane as a helical segment; it reads FWNLVDVVLLGFSVATIILSV. Asn377 carries N-linked (GlcNAc...) asparagine glycosylation. At 377-409 the chain is on the extracellular side; sequence NRTKTGVNRVNSVIENGLTNAPFDDVTSSENSY. A helical membrane pass occupies residues 410–430; the sequence is LNIKACVVFVAWVKVFKFISV. The Cytoplasmic segment spans residues 431–447; that stretch reads NKTMSQLSSTLTRSAKD. Residues 448-468 form a helical membrane-spanning segment; it reads IGGFAVMFAVFFFAFAQFGYL. The Extracellular segment spans residues 469–482; sequence CFGTQIADYSNLYN. The segment at residues 483–497 is an intramembrane region (pore-forming); that stretch reads SAFALLRLILGDFNF. Topologically, residues 498–510 are extracellular; it reads SALESCNRFFGPA. The helical transmembrane segment at 511-531 threads the bilayer; sequence FFIAYVFFVSFILLNMFLAII. At 532–716 the chain is on the cytoplasmic side; that stretch reads NDSYVEVKAE…ITSIADKKEE (185 aa). Ser534 is subject to Phosphoserine; by CK2. A coiled-coil region spans residues 613 to 680; the sequence is EKVAEDIADE…IEKQRVQQQD (68 aa). Positions 696–716 are disordered; that stretch reads RNRESAARRPTITSIADKKEE.

This sequence belongs to the polycystin family. Phosphorylated. CK2 (kin-3 and kin-10) and calcineurin act antagonistically to regulate the phosphorylation state. Exclusively expressed in a subset of 3 categories of adult male sensory neurons: ray neurons, hook neurons and head cephalic (CEM) neurons. Expressed in the male tail.

It localises to the cell membrane. It is found in the cell projection. Its subcellular location is the cilium membrane. The protein resides in the cilium. The protein localises to the axon. It localises to the dendrite. It is found in the perikaryon. Its subcellular location is the endoplasmic reticulum membrane. In terms of biological role, functions as a calcium permeable cation channel. Required for 2 aspects of male mating behavior: response to hermaphrodite contact and vulva location. Acts in the same pathway as lov-1 and atp-2 in response behavior. The polypeptide is Polycystin-2 (Caenorhabditis elegans).